A 494-amino-acid polypeptide reads, in one-letter code: ATP synthase subunit beta, plastid (494 aa).

169–176 lines the ATP pocket; it reads GGAGVGKT.

Belongs to the ATPase alpha/beta chains family. As to quaternary structure, F-type ATPases have 2 components, CF(1) - the catalytic core - and CF(0) - the membrane proton channel. CF(1) has five subunits: alpha(3), beta(3), gamma(1), delta(1), epsilon(1). CF(0) has four main subunits: a(1), b(1), b'(1) and c(9-12).

The protein localises to the plastid thylakoid membrane. It catalyses the reaction ATP + H2O + 4 H(+)(in) = ADP + phosphate + 5 H(+)(out). Functionally, produces ATP from ADP in the presence of a proton gradient across the membrane. The catalytic sites are hosted primarily by the beta subunits. The sequence is that of ATP synthase subunit beta, plastid (atpB) from Cuscuta gronovii (Common dodder).